We begin with the raw amino-acid sequence, 144 residues long: Vasopressin-neurophysin 2-copeptin (144 aa).

Cysteines 1 and 6 form a disulfide. The residue at position 9 (glycine 9) is a Glycine amide. 7 disulfides stabilise this stretch: cysteine 22–cysteine 66, cysteine 25–cysteine 39, cysteine 33–cysteine 56, cysteine 40–cysteine 46, cysteine 73–cysteine 85, cysteine 79–cysteine 97, and cysteine 86–cysteine 91. Residue asparagine 112 is glycosylated (N-linked (GlcNAc...) asparagine).

The protein belongs to the vasopressin/oxytocin family. In terms of assembly, interacts with vasopressin receptors V1bR/AVPR1B (Ki=85 pM), V1aR/AVPR1A (Ki=0.6 nM) and V2R/AVPR2 (Ki=4.9 nM). Interacts with oxytocin receptor (OXTR) (Ki=110 nM).

It localises to the secreted. Its function is as follows. Neurophysin 2 specifically binds vasopressin. Vasopressin has a direct antidiuretic action on the kidney, it also causes vasoconstriction of the peripheral vessels. Acts by binding to vasopressin receptors (V1bR/AVPR1B, V1aR/AVPR1A, and V2R/AVPR2). The polypeptide is Vasopressin-neurophysin 2-copeptin (AVP) (Cavia porcellus (Guinea pig)).